Consider the following 2225-residue polypeptide: Multifunctional protein CAD (2225 aa).

A2 carries the N-acetylalanine modification. Positions 2-365 (AALVLEDGSV…TVREAVAGNP (364 aa)) are GATase (Glutamine amidotransferase). The L-glutamine site is built by S44, G222, and G224. A Glutamine amidotransferase type-1 domain is found at 177–363 (RICALDCGLK…LETVREAVAG (187 aa)). The active-site Nucleophile; for GATase activity is C252. L-glutamine contacts are provided by L253, Q256, N294, G296, and F297. Catalysis depends on for GATase activity residues H336 and E338. Residues 366 to 394 (GGQTVKERLVQRLCPPGLLIPGSGLPPPR) are linker. The tract at residues 395 to 933 (KVLILGSGGL…NTHDLDFRTP (539 aa)) is CPSase A. The segment at 395 to 1455 (KVLILGSGGL…APPLKVHVDC (1061 aa)) is CPSase (Carbamoyl phosphate synthase). T456 bears the Phosphothreonine; by MAPK1 mark. 11 residues coordinate ATP: R515, R555, G561, G562, K592, E599, G625, I626, H627, Q668, and E682. Positions 519–711 (AARMAEIGEH…LAYVAAKLAL (193 aa)) constitute an ATP-grasp 1 domain. The Mg(2+) site is built by Q668, E682, and N684. Residues Q668, E682, and N684 each coordinate Mn(2+). K747 is modified (N6-acetyllysine). Positions 934 to 1455 (HVLVLGSGVY…APPLKVHVDC (522 aa)) are CPSase B. S1038 is subject to Phosphoserine. The region spanning 1052–1243 (SRLLDTIGIS…LVALATRIIM (192 aa)) is the ATP-grasp 2 domain. ATP is bound by residues R1088, K1127, I1129, E1134, G1159, V1160, H1161, S1162, Q1202, and E1214. The Mg(2+) site is built by Q1202, E1214, and N1216. Residues Q1202, E1214, and N1216 each coordinate Mn(2+). The MGS-like domain maps to 1308 to 1462 (FKIPKKNILL…VDCMTSQKLV (155 aa)). S1406 bears the Phosphoserine; by PKA mark. Residue K1411 is modified to N6-acetyllysine. The segment at 1456-1788 (MTSQKLVRLP…VKGTIRRVVL (333 aa)) is DHOase (dihydroorotase). Positions 1471 and 1473 each coordinate Zn(2+). (S)-dihydroorotate is bound by residues R1475 and N1505. 5 residues coordinate Zn(2+): K1556, H1590, C1613, H1614, and E1637. At K1556 the chain carries N6-carboxylysine. Residue R1661 participates in (S)-dihydroorotate binding. D1686 serves as a coordination point for Zn(2+). The active-site For DHOase activity is the D1686. Residues H1690 and P1702 each contribute to the (S)-dihydroorotate site. The linker stretch occupies residues 1789–1917 (RGEVAYIDGQ…GLLHPQTSPL (129 aa)). The tract at residues 1813-1911 (PQGAVPQPPP…QNLGSSGLLH (99 aa)) is disordered. The segment covering 1825–1834 (PATTEITTTP) has biased composition (low complexity). S1859 is subject to Phosphoserine; by RPS6KB1 and PKA. Residues 1866-1878 (EEPKEKPSRKVVE) are compositionally biased toward basic and acidic residues. S1873 is modified (phosphoserine; by PKC; in vitro). T1884 is subject to Phosphothreonine. Over residues 1899-1911 (ASPQNLGSSGLLH) the composition is skewed to polar residues. S1900 and S1938 each carry phosphoserine. The segment at 1918 to 2225 (LHSLVGQHIL…ALLATVLGRF (308 aa)) is ATCase (Aspartate transcarbamylase). Carbamoyl phosphate is bound by residues R1975 and T1976. Residue K2003 participates in L-aspartate binding. Residues R2024, H2052, and Q2055 each coordinate carbamoyl phosphate. L-aspartate contacts are provided by R2085 and R2146. Carbamoyl phosphate contacts are provided by M2185 and P2186.

The protein in the N-terminal section; belongs to the CarA family. In the 2nd section; belongs to the CarB family. This sequence in the 3rd section; belongs to the metallo-dependent hydrolases superfamily. DHOase family. CAD subfamily. It in the C-terminal section; belongs to the aspartate/ornithine carbamoyltransferase superfamily. ATCase family. Homohexamer. Interacts with CIPC. Zn(2+) is required as a cofactor. It depends on Mg(2+) as a cofactor. Requires Mn(2+) as cofactor. In terms of processing, activated by MAP kinase (Erk1/2) phosphorylation just prior to the S phase of the cell cycle, when the demand for pyrimidine nucleotides is greatest, and down-regulated as the cells emerge from S phase by protein kinase A (PKA) phosphorylation. Phosphorylation at Ser-1859 by RPS6KB1 downstream of MTOR promotes oligomerization and stimulates dihydroorotase activity. Phosphorylation at Ser-1406 reduces sensitivity to feedback inhibition by UTP.

The protein resides in the cytoplasm. It is found in the nucleus. The catalysed reaction is hydrogencarbonate + L-glutamine + 2 ATP + H2O = carbamoyl phosphate + L-glutamate + 2 ADP + phosphate + 2 H(+). The enzyme catalyses L-glutamine + H2O = L-glutamate + NH4(+). It carries out the reaction hydrogencarbonate + NH4(+) + 2 ATP = carbamoyl phosphate + 2 ADP + phosphate + 2 H(+). It catalyses the reaction carbamoyl phosphate + L-aspartate = N-carbamoyl-L-aspartate + phosphate + H(+). The catalysed reaction is (S)-dihydroorotate + H2O = N-carbamoyl-L-aspartate + H(+). The protein operates within pyrimidine metabolism; UMP biosynthesis via de novo pathway; (S)-dihydroorotate from bicarbonate: step 1/3. It functions in the pathway pyrimidine metabolism; UMP biosynthesis via de novo pathway; (S)-dihydroorotate from bicarbonate: step 2/3. Its pathway is pyrimidine metabolism; UMP biosynthesis via de novo pathway; (S)-dihydroorotate from bicarbonate: step 3/3. With respect to regulation, allosterically regulated and controlled by phosphorylation. 5-phosphoribose 1-diphosphate (PRPP) is an activator while UMP and UTP are inhibitors of the CPSase reaction. Functionally, multifunctional protein that encodes the first 3 enzymatic activities of the de novo pyrimidine pathway: carbamoylphosphate synthetase (CPSase; EC 6.3.5.5), aspartate transcarbamylase (ATCase; EC 2.1.3.2) and dihydroorotase (DHOase; EC 3.5.2.3). The CPSase-function is accomplished in 2 steps, by a glutamine-dependent amidotransferase activity (GATase) that binds and cleaves glutamine to produce ammonia, followed by an ammonium-dependent carbamoyl phosphate synthetase, which reacts with the ammonia, hydrogencarbonate and ATP to form carbamoyl phosphate. The endogenously produced carbamoyl phosphate is sequestered and channeled to the ATCase active site. ATCase then catalyzes the formation of carbamoyl-L-aspartate from L-aspartate and carbamoyl phosphate. In the last step, DHOase catalyzes the cyclization of carbamoyl aspartate to dihydroorotate. The polypeptide is Multifunctional protein CAD (CAD) (Mesocricetus auratus (Golden hamster)).